The following is a 326-amino-acid chain: Transcription factor MYB16 (326 aa).

HTH myb-type domains are found at residues 9–61 (KLGL…TNYL) and 62–116 (RPDI…KKRL). DNA-binding regions (H-T-H motif) lie at residues 37-61 (WRSL…TNYL) and 89-112 (WSAI…NTHL). Disordered regions lie at residues 197-217 (NWTT…STVS) and 280-299 (DRSF…GGDC). A compositionally biased stretch (polar residues) spans 208–217 (QLESPTSTVS). The span at 280–290 (DRSFSGDKNET) shows a compositional bias: basic and acidic residues.

Expressed in trichomes, epidermis and mesophyll cells of young leaves, stems, petals, sepals, carpels and stamens.

The protein localises to the nucleus. Involved in the control of epidermal cell morphogenesis in petals. Promotes unidirectional cell expansion once outgrowth has been initiated. Coordinately with WIN1/SHN1, participates in the regulation of cuticle biosynthesis and wax accumulation in reproductive organs and trichomes. Functions in cuticle nanoridge formation in petals and stamens, and in morphogenesis of petal conical cells and trichomes. Functions as a major regulator of cuticle formation in vegetative organs by regulating the cuticle biosynthesis genes CYP86A8/LCR and CER1. This is Transcription factor MYB16 from Arabidopsis thaliana (Mouse-ear cress).